Consider the following 883-residue polypeptide: Alanine--tRNA ligase (883 aa).

H560, H564, C665, and H669 together coordinate Zn(2+).

It belongs to the class-II aminoacyl-tRNA synthetase family. Requires Zn(2+) as cofactor.

It is found in the cytoplasm. It catalyses the reaction tRNA(Ala) + L-alanine + ATP = L-alanyl-tRNA(Ala) + AMP + diphosphate. In terms of biological role, catalyzes the attachment of alanine to tRNA(Ala) in a two-step reaction: alanine is first activated by ATP to form Ala-AMP and then transferred to the acceptor end of tRNA(Ala). Also edits incorrectly charged Ser-tRNA(Ala) and Gly-tRNA(Ala) via its editing domain. In Mesomycoplasma hyopneumoniae (strain J / ATCC 25934 / NCTC 10110) (Mycoplasma hyopneumoniae), this protein is Alanine--tRNA ligase.